A 296-amino-acid polypeptide reads, in one-letter code: Polyadenylate-binding protein 2-A (296 aa).

Residues 1–106 form a disordered region; it reads MAAVSSVASL…GELTGDQTIE (106 aa). Over residues 71–82 the composition is skewed to gly residues; it reads GRGGSGGGGAGG. Residues 84 to 97 are compositionally biased toward acidic residues; it reads EELEDEELEEEEPG. A coiled-coil region spans residues 107–141; the sequence is DPELEAIKARVREMEEEAEKLKELQNEVEKQMNMS. Residues 146-296 are necessary for homooligomerization; it reads NAGPVIMSVE…ARATSWYTPY (151 aa). In terms of domain architecture, RRM spans 163–240; sequence RSIYVGNVDY…RQIKVVPKRT (78 aa).

In terms of assembly, monomer and homooligomer. Binds RNA as a monomer and oligomerizes when bound to poly(A). Shows dynamic spatial expression throughout development. First expressed in the animal pole region of the egg and this pattern persists through to the blastula stage. In gastrula and neurula embryos, expressed mainly in ectodermal, neural and epidermal regions. Neural tissue-specific expression pattern persists into tailbud stage when expression is localized to the brain and spinal cord. At early tadpole stage, expression becomes gradually confined to the specific vesicle regions of the developing brain. At stage 39, expressed in the telencephalon and mesencephalon regions of the brain. Also detected in the eye and olfactory pit at the tadpole stage. Expressed during gut endoderm development. At stage 35, expressed exclusively in the anterior portion of the gut endoderm, which includes the prospective liver, stomach and pancreas. As development proceeds, expression becomes restricted to the pancreas, and by stage 46/47 (the seventh day of development) expression is localized exclusively to the pancreas. Expressed in most adult tissues.

It localises to the nucleus. The protein localises to the cytoplasm. In terms of biological role, involved in the 3'-end formation of mRNA precursors (pre-mRNA) by the addition of a poly(A) tail of 200-250 nt to the upstream cleavage product. Stimulates poly(A) polymerase (PAPOLA) conferring processivity on the poly(A) tail elongation reaction and also controls the poly(A) tail length. Increases the affinity of poly(A) polymerase for RNA. Binds to poly(A) and to poly(G) with high affinity. May protect the poly(A) tail from degradation. In Xenopus laevis (African clawed frog), this protein is Polyadenylate-binding protein 2-A (pabpn1-a).